The following is a 67-amino-acid chain: uncharacterized protein (67 aa).

A run of 2 helical transmembrane segments spans residues 13–32 (IACL…GFIV) and 42–64 (RLTN…TLGL).

The protein resides in the membrane. This is an uncharacterized protein from Saccharomyces cerevisiae (strain ATCC 204508 / S288c) (Baker's yeast).